The chain runs to 152 residues: Transcriptional repressor NrdR (152 aa).

A zinc finger lies at 3-34; the sequence is CPKCGSLNDKVVDTRQSKDGTVIRRRRECLDC. Positions 49–139 constitute an ATP-cone domain; it reads IVVKKKNGTT…VYNEFQDIKD (91 aa).

This sequence belongs to the NrdR family. Zn(2+) serves as cofactor.

In terms of biological role, negatively regulates transcription of bacterial ribonucleotide reductase nrd genes and operons by binding to NrdR-boxes. This chain is Transcriptional repressor NrdR, found in Persephonella marina (strain DSM 14350 / EX-H1).